The primary structure comprises 428 residues: Nucleotidyltransferase MB21D2 (428 aa).

The interval 366 to 389 (QRRGSTTSIPSPQSDGGDPNQPDD) is disordered. Residues 368–379 (RGSTTSIPSPQS) are compositionally biased toward polar residues. Thr372 is modified (phosphothreonine). A phosphoserine mark is found at Ser373, Ser376, and Ser379.

The protein belongs to the mab-21 family.

In terms of biological role, probable nucleotidyltransferase that catalyzes the formation of cyclic dinucleotide second messenger in response to some unknown stimulus. In Mus musculus (Mouse), this protein is Nucleotidyltransferase MB21D2.